We begin with the raw amino-acid sequence, 72 residues long: Translation initiation factor IF-1 (72 aa).

An S1-like domain is found at 1 to 72 (MAKEEVLEFP…TKGRITYRLK (72 aa)).

Belongs to the IF-1 family. In terms of assembly, component of the 30S ribosomal translation pre-initiation complex which assembles on the 30S ribosome in the order IF-2 and IF-3, IF-1 and N-formylmethionyl-tRNA(fMet); mRNA recruitment can occur at any time during PIC assembly.

The protein resides in the cytoplasm. In terms of biological role, one of the essential components for the initiation of protein synthesis. Stabilizes the binding of IF-2 and IF-3 on the 30S subunit to which N-formylmethionyl-tRNA(fMet) subsequently binds. Helps modulate mRNA selection, yielding the 30S pre-initiation complex (PIC). Upon addition of the 50S ribosomal subunit IF-1, IF-2 and IF-3 are released leaving the mature 70S translation initiation complex. The chain is Translation initiation factor IF-1 from Brucella suis biovar 1 (strain 1330).